Consider the following 352-residue polypeptide: N-acetyl-gamma-glutamyl-phosphate reductase (352 aa).

Residue C158 is part of the active site.

Belongs to the NAGSA dehydrogenase family. Type 1 subfamily.

The protein resides in the cytoplasm. The catalysed reaction is N-acetyl-L-glutamate 5-semialdehyde + phosphate + NADP(+) = N-acetyl-L-glutamyl 5-phosphate + NADPH + H(+). Its pathway is amino-acid biosynthesis; L-arginine biosynthesis; N(2)-acetyl-L-ornithine from L-glutamate: step 3/4. Its function is as follows. Catalyzes the NADPH-dependent reduction of N-acetyl-5-glutamyl phosphate to yield N-acetyl-L-glutamate 5-semialdehyde. The polypeptide is N-acetyl-gamma-glutamyl-phosphate reductase (Mycobacterium bovis (strain BCG / Tokyo 172 / ATCC 35737 / TMC 1019)).